We begin with the raw amino-acid sequence, 426 residues long: 10-deoxymethynolide desosaminyltransferase (426 aa).

This sequence belongs to the glycosyltransferase 28 family. Forms a complex with DesVIII.

It carries out the reaction 10-deoxymethynolide + dTDP-alpha-D-desosamine = 10-deoxymethymycin + dTDP + H(+). It participates in antibiotic biosynthesis. In terms of biological role, involved in the biosynthesis of the macrolide antibiotics methymycin, neomethymycin, narbomycin, and pikromycin. Catalyzes the attachment of dTDP-D-desosamine onto 12- and 14-membered macrolactone rings 10-deoxymethynolide and narbonolide to produce 10-deoxymethymycin (YC-17) and narbomycin. DesVII is unique among glycosyltransferases in that it requires an additional protein component, DesVIII, for its activity. DesVII can recognize and process not only cyclic substrates of different ring size, but also a variety of linear substrates albeit with reduced, but measurable activities. Both L-sugars and D-sugars are recognized as substrates and variant substitutions at C-3 and C-4 are tolerated, but deoxygenation at C-6 is required. The polypeptide is 10-deoxymethynolide desosaminyltransferase (Streptomyces venezuelae).